The chain runs to 353 residues: UDP-N-acetylglucosamine--N-acetylmuramyl-(pentapeptide) pyrophosphoryl-undecaprenol N-acetylglucosamine transferase (353 aa).

Residues Thr10 to Gly12, Asn124, Ser183, and Gln283 contribute to the UDP-N-acetyl-alpha-D-glucosamine site.

It belongs to the glycosyltransferase 28 family. MurG subfamily.

It localises to the cell inner membrane. The catalysed reaction is di-trans,octa-cis-undecaprenyl diphospho-N-acetyl-alpha-D-muramoyl-L-alanyl-D-glutamyl-meso-2,6-diaminopimeloyl-D-alanyl-D-alanine + UDP-N-acetyl-alpha-D-glucosamine = di-trans,octa-cis-undecaprenyl diphospho-[N-acetyl-alpha-D-glucosaminyl-(1-&gt;4)]-N-acetyl-alpha-D-muramoyl-L-alanyl-D-glutamyl-meso-2,6-diaminopimeloyl-D-alanyl-D-alanine + UDP + H(+). It functions in the pathway cell wall biogenesis; peptidoglycan biosynthesis. Functionally, cell wall formation. Catalyzes the transfer of a GlcNAc subunit on undecaprenyl-pyrophosphoryl-MurNAc-pentapeptide (lipid intermediate I) to form undecaprenyl-pyrophosphoryl-MurNAc-(pentapeptide)GlcNAc (lipid intermediate II). The sequence is that of UDP-N-acetylglucosamine--N-acetylmuramyl-(pentapeptide) pyrophosphoryl-undecaprenol N-acetylglucosamine transferase from Helicobacter acinonychis (strain Sheeba).